The sequence spans 119 residues: Toxin ICK-9 (119 aa).

The N-terminal stretch at 1–19 (MMKLYSLVIIATLAAAAFA) is a signal peptide. Disulfide bonds link Cys59-Cys74, Cys67-Cys80, Cys71-Cys116, and Cys73-Cys87.

The protein belongs to the neurotoxin 25 family. ICK-8 subfamily. In terms of tissue distribution, expressed by the venom gland.

The protein localises to the secreted. Ion channel inhibitor. The polypeptide is Toxin ICK-9 (Trittame loki (Brush-footed trapdoor spider)).